The chain runs to 859 residues: Ubiquitin carboxyl-terminal hydrolase 23 (859 aa).

Residues 1–24 (MEVATSSTEITIQTDRDPSSNNNG) are compositionally biased toward polar residues. Residues 1–26 (MEVATSSTEITIQTDRDPSSNNNGSC) are disordered. In terms of domain architecture, USP spans 107–410 (AGLQNLGNTC…KAYMLFYVRD (304 aa)). Cysteine 116 functions as the Nucleophile in the catalytic mechanism. The active-site Proton acceptor is histidine 369. Disordered regions lie at residues 722-749 (MISSSDGAVTSDQQQPVGSSDLSEASQN) and 822-859 (EESYRGPNPFQMLASKRQKETKKKWTQSITDAKTAYRI).

This sequence belongs to the peptidase C19 family.

The enzyme catalyses Thiol-dependent hydrolysis of ester, thioester, amide, peptide and isopeptide bonds formed by the C-terminal Gly of ubiquitin (a 76-residue protein attached to proteins as an intracellular targeting signal).. In terms of biological role, recognizes and hydrolyzes the peptide bond at the C-terminal Gly of ubiquitin. Involved in the processing of poly-ubiquitin precursors as well as that of ubiquitinated proteins. This is Ubiquitin carboxyl-terminal hydrolase 23 (UBP23) from Arabidopsis thaliana (Mouse-ear cress).